A 259-amino-acid polypeptide reads, in one-letter code: Ribonuclease PH (259 aa).

Phosphate is bound by residues arginine 88 and 126-128; that span reads GTR.

It belongs to the RNase PH family. Homohexameric ring arranged as a trimer of dimers.

It carries out the reaction tRNA(n+1) + phosphate = tRNA(n) + a ribonucleoside 5'-diphosphate. In terms of biological role, phosphorolytic 3'-5' exoribonuclease that plays an important role in tRNA 3'-end maturation. Removes nucleotide residues following the 3'-CCA terminus of tRNAs; can also add nucleotides to the ends of RNA molecules by using nucleoside diphosphates as substrates, but this may not be physiologically important. Probably plays a role in initiation of 16S rRNA degradation (leading to ribosome degradation) during starvation. The chain is Ribonuclease PH from Mycobacterium bovis (strain ATCC BAA-935 / AF2122/97).